Here is a 277-residue protein sequence, read N- to C-terminus: Sulfur carrier protein FdhD (277 aa).

Residue Cys-123 is the Cysteine persulfide intermediate of the active site. Mo-bis(molybdopterin guanine dinucleotide) is bound at residue 263–268 (FVRGNK).

The protein belongs to the FdhD family.

The protein resides in the cytoplasm. Its function is as follows. Required for formate dehydrogenase (FDH) activity. Acts as a sulfur carrier protein that transfers sulfur from IscS to the molybdenum cofactor prior to its insertion into FDH. The protein is Sulfur carrier protein FdhD of Corynebacterium efficiens (strain DSM 44549 / YS-314 / AJ 12310 / JCM 11189 / NBRC 100395).